A 319-amino-acid polypeptide reads, in one-letter code: Thioredoxin reductase (319 aa).

36 to 43 (TGINKGGQ) provides a ligand contact to FAD. Cys136 and Cys139 are joined by a disulfide. FAD is bound at residue 288–297 (DVIDHVYRQA).

The protein belongs to the class-II pyridine nucleotide-disulfide oxidoreductase family. In terms of assembly, homodimer. FAD is required as a cofactor.

Its subcellular location is the cytoplasm. It carries out the reaction [thioredoxin]-dithiol + NADP(+) = [thioredoxin]-disulfide + NADPH + H(+). The chain is Thioredoxin reductase (trxB) from Buchnera aphidicola subsp. Schizaphis graminum (strain Sg).